The following is a 420-amino-acid chain: Probable protein phosphatase 2C 76 (420 aa).

One can recognise a PPM-type phosphatase domain in the interval 101 to 347; the sequence is SCGYCSFRGK…DNITCIVVKF (247 aa). Residues aspartate 137, glycine 138, aspartate 299, and aspartate 338 each coordinate Mn(2+). The tract at residues 353 to 420 is disordered; the sequence is ESPKIETNAM…PETKGEKAGE (68 aa). Over residues 403–420 the composition is skewed to basic and acidic residues; that stretch reads PDPKPETEPETKGEKAGE.

Belongs to the PP2C family. It depends on Mg(2+) as a cofactor. Mn(2+) serves as cofactor.

The enzyme catalyses O-phospho-L-seryl-[protein] + H2O = L-seryl-[protein] + phosphate. It catalyses the reaction O-phospho-L-threonyl-[protein] + H2O = L-threonyl-[protein] + phosphate. The polypeptide is Probable protein phosphatase 2C 76 (Arabidopsis thaliana (Mouse-ear cress)).